The following is a 454-amino-acid chain: Glutamine synthetase (454 aa).

A GS beta-grasp domain is found at 19–111; sequence NNVKFIRFQF…VICDVYKDEK (93 aa). In terms of domain architecture, GS catalytic spans 118–454; sequence PRSRLKAILE…DWETGKYLIY (337 aa). Mg(2+) is bound by residues Glu-142 and Glu-144. Glu-194 contacts ATP. Mg(2+) contacts are provided by Glu-199 and Glu-206. L-glutamate is bound by residues 250–251 and Gly-251; that span reads NG. Mg(2+) is bound at residue His-255. Residues 257 to 259 and Ser-259 contribute to the ATP site; that span reads HQS. L-glutamate-binding residues include Arg-309, Glu-315, and Arg-327. ATP contacts are provided by Arg-327, Arg-332, and Lys-339. A Mg(2+)-binding site is contributed by Glu-344. Arg-346 provides a ligand contact to L-glutamate.

Belongs to the glutamine synthetase family. In terms of assembly, oligomer of 12 subunits arranged in the form of two hexagons. Requires Mg(2+) as cofactor.

The protein localises to the cytoplasm. The catalysed reaction is L-glutamate + NH4(+) + ATP = L-glutamine + ADP + phosphate + H(+). Its activity is regulated as follows. Feedback inhibited by glycine and alanine, and inhibited by low concentrations of methionine sulfoximine. Its function is as follows. Probably involved in nitrogen metabolism via ammonium assimilation. Catalyzes the ATP-dependent biosynthesis of glutamine from glutamate and ammonia. Beta-glutamate is a much poorer substrate than alpha-glutamate. In Methanocaldococcus jannaschii (strain ATCC 43067 / DSM 2661 / JAL-1 / JCM 10045 / NBRC 100440) (Methanococcus jannaschii), this protein is Glutamine synthetase.